A 258-amino-acid polypeptide reads, in one-letter code: Small ribosomal subunit protein uS2 (258 aa).

The disordered stretch occupies residues 226–258 (KQGQDDEETLEVDFKENADGSEEIVSAEENPED). Residues 244 to 258 (DGSEEIVSAEENPED) show a composition bias toward acidic residues.

It belongs to the universal ribosomal protein uS2 family.

The protein is Small ribosomal subunit protein uS2 of Lactobacillus acidophilus (strain ATCC 700396 / NCK56 / N2 / NCFM).